The following is a 317-amino-acid chain: Ribose-phosphate pyrophosphokinase A (317 aa).

Mg(2+) contacts are provided by Asp130, His132, and Asp145. A binding of phosphoribosylpyrophosphate region spans residues 212–227 (KDKVALIVDDMADTCG).

The protein belongs to the ribose-phosphate pyrophosphokinase family. Requires Mg(2+) as cofactor.

It catalyses the reaction D-ribose 5-phosphate + ATP = 5-phospho-alpha-D-ribose 1-diphosphate + AMP + H(+). It participates in metabolic intermediate biosynthesis; 5-phospho-alpha-D-ribose 1-diphosphate biosynthesis; 5-phospho-alpha-D-ribose 1-diphosphate from D-ribose 5-phosphate (route I): step 1/1. In Dictyostelium discoideum (Social amoeba), this protein is Ribose-phosphate pyrophosphokinase A (prsA).